The primary structure comprises 442 residues: PCI domain-containing protein C1105.07c (442 aa).

Residues 224 to 415 (VTFRYYLGRC…STLVLKKDPS (192 aa)) form the PCI domain.

Its subcellular location is the cytoplasm. The protein localises to the nucleus envelope. The sequence is that of PCI domain-containing protein C1105.07c from Schizosaccharomyces pombe (strain 972 / ATCC 24843) (Fission yeast).